The following is a 491-amino-acid chain: UDP-N-acetylmuramate--L-alanine ligase (491 aa).

Residue 126 to 132 (GTHGKTT) participates in ATP binding.

Belongs to the MurCDEF family.

It localises to the cytoplasm. It catalyses the reaction UDP-N-acetyl-alpha-D-muramate + L-alanine + ATP = UDP-N-acetyl-alpha-D-muramoyl-L-alanine + ADP + phosphate + H(+). Its pathway is cell wall biogenesis; peptidoglycan biosynthesis. In terms of biological role, cell wall formation. The protein is UDP-N-acetylmuramate--L-alanine ligase of Salmonella choleraesuis (strain SC-B67).